The following is a 274-amino-acid chain: NH(3)-dependent NAD(+) synthetase (274 aa).

46–53 (GISGGQDS) lines the ATP pocket. A Mg(2+)-binding site is contributed by Asp52. Arg140 contributes to the deamido-NAD(+) binding site. An ATP-binding site is contributed by Thr160. Glu165 provides a ligand contact to Mg(2+). 2 residues coordinate deamido-NAD(+): Lys173 and Asp180. Residues Lys189 and Thr211 each contribute to the ATP site. 260–261 (HK) provides a ligand contact to deamido-NAD(+).

This sequence belongs to the NAD synthetase family. Homodimer.

It carries out the reaction deamido-NAD(+) + NH4(+) + ATP = AMP + diphosphate + NAD(+) + H(+). Its pathway is cofactor biosynthesis; NAD(+) biosynthesis; NAD(+) from deamido-NAD(+) (ammonia route): step 1/1. Functionally, catalyzes the ATP-dependent amidation of deamido-NAD to form NAD. Uses ammonia as a nitrogen source. This is NH(3)-dependent NAD(+) synthetase from Sodalis glossinidius (strain morsitans).